The chain runs to 272 residues: Ribosomal RNA small subunit methyltransferase A (272 aa).

Residues His-13, Leu-15, Gly-40, Glu-61, Asp-85, and Asn-105 each contribute to the S-adenosyl-L-methionine site.

This sequence belongs to the class I-like SAM-binding methyltransferase superfamily. rRNA adenine N(6)-methyltransferase family. RsmA subfamily.

It localises to the cytoplasm. The catalysed reaction is adenosine(1518)/adenosine(1519) in 16S rRNA + 4 S-adenosyl-L-methionine = N(6)-dimethyladenosine(1518)/N(6)-dimethyladenosine(1519) in 16S rRNA + 4 S-adenosyl-L-homocysteine + 4 H(+). Functionally, specifically dimethylates two adjacent adenosines (A1518 and A1519) in the loop of a conserved hairpin near the 3'-end of 16S rRNA in the 30S particle. May play a critical role in biogenesis of 30S subunits. This Bacteroides fragilis (strain ATCC 25285 / DSM 2151 / CCUG 4856 / JCM 11019 / LMG 10263 / NCTC 9343 / Onslow / VPI 2553 / EN-2) protein is Ribosomal RNA small subunit methyltransferase A.